We begin with the raw amino-acid sequence, 245 residues long: Endonuclease III (245 aa).

Residues 119 to 138 (MVDLFTLPGVGRKTANVILG) form the HhH domain. [4Fe-4S] cluster contacts are provided by Cys-198, Cys-205, Cys-208, and Cys-214.

It belongs to the Nth/MutY family. It depends on [4Fe-4S] cluster as a cofactor.

It carries out the reaction 2'-deoxyribonucleotide-(2'-deoxyribose 5'-phosphate)-2'-deoxyribonucleotide-DNA = a 3'-end 2'-deoxyribonucleotide-(2,3-dehydro-2,3-deoxyribose 5'-phosphate)-DNA + a 5'-end 5'-phospho-2'-deoxyribonucleoside-DNA + H(+). In terms of biological role, DNA repair enzyme that has both DNA N-glycosylase activity and AP-lyase activity. The DNA N-glycosylase activity releases various damaged pyrimidines from DNA by cleaving the N-glycosidic bond, leaving an AP (apurinic/apyrimidinic) site. The AP-lyase activity cleaves the phosphodiester bond 3' to the AP site by a beta-elimination, leaving a 3'-terminal unsaturated sugar and a product with a terminal 5'-phosphate. The polypeptide is Endonuclease III (Mycobacterium leprae (strain TN)).